We begin with the raw amino-acid sequence, 304 residues long: DCN1-like protein 3 (304 aa).

2 disordered regions span residues 1 to 86 and 284 to 304; these read MGQC…AEES and EGEG…EEQT. G2 carries N-myristoyl glycine lipidation. In terms of domain architecture, DCUN1 spans 86 to 278; sequence SSLQRLEELF…LFDTFVEWEM (193 aa).

Part of a complex containing DCUN1D3, CUL3 and RBX1. Interacts (via the DCUN1 domain) with the unneddylated cullins: interacts with CUL1, CUL2, CUL3, CUL4A, CUL4B and CUL5; these interactions promote the cullin neddylation and the identity of the cullin dictates the affinity of the interaction. Interacts preferentially with CUL3; this interaction triggers the relocalization of CUL3 to the cell membrane where CUL3 is neddylated. Interacts (via DCUN1 domain) with RBX1. May also interact with regulators or subunits of cullin-RING ligases such as RNF7, ELOB and DDB1; these interactions are bridged by cullins. Interacts (via DCUN1 domain) with CAND1; this interaction is bridged by cullins and strongly inhibits cullin neddylation. These CAND-cullin-DCNL complexes can only be neddylated in the presence of a substrate adapter. Interacts (via DCUN1 domain) with the N-terminally acetylated form of UBE2M and UBE2F. Tends to be down-regulated in different type of cancers, including lung neuroendocrine carcinoma, thyroid Huerthle cell carcinoma and lung squamous cell carcinoma. Mostly expressed in testis and brain. Highly expressed in liver, bladder and renal normal tissue than their tumor tissue counterparts. Palmitoylation stabilizes DCUN1D3 at the cell membrane.

The protein resides in the cell membrane. It localises to the cytoplasm. It is found in the nucleus. Its subcellular location is the perinuclear region. Contributes to the neddylation of all cullins by transferring NEDD8 from N-terminally acetylated NEDD8-conjugating E2s enzyme to different cullin C-terminal domain-RBX complexes and may play a role in the cell cycle progression by regulating the SCF ubiquitin E3 ligase complex, after UV damage. At the cell membrane, can promote and as well inhibit cullins neddylation. This Homo sapiens (Human) protein is DCN1-like protein 3.